The sequence spans 465 residues: Zinc finger and BTB domain-containing protein 32 (465 aa).

The 59-residue stretch at 29–87 folds into the BTB domain; sequence CDTLITVGGLEFPAHSLVLAGASPRLGCRGRWALVEDISPSTFAQILTFVYGESIELQP. Disordered stretches follow at residues 111-179 and 285-310; these read RAQK…EMAG and QNQL…PWQI. Composition is skewed to basic and acidic residues over residues 123-139 and 147-176; these read PGLK…RGSE and EKQK…ERPE. C2H2-type zinc fingers lie at residues 350-372, 378-400, and 405-427; these read YSCS…YRVH, FSCS…LRTH, and YRCP…MRGH.

This sequence belongs to the krueppel C2H2-type zinc-finger protein family. In terms of assembly, homodimer (via PTB domain). Interacts with the N-terminal of FANCC. Interacts with ZBTB16. Interacts with GATA3. As to expression, isoform 1 is testis-specific and is not expressed in lymphoid organs such as thymus or spleen. Isoform 2 is expressed in both B- and T-lymphoid cells.

It localises to the nucleus. In terms of biological role, DNA-binding protein that binds to the to a 5'-TGTACAGTGT-3' core sequence. May function as a transcriptional transactivator and transcriptional repressor. Probably exerts its repressor effect by preventing GATA3 from binding to DNA. May play a role in regulating the differentiation and activation of helper T-cells. This chain is Zinc finger and BTB domain-containing protein 32 (Zbtb32), found in Mus musculus (Mouse).